The primary structure comprises 251 residues: Hydroxyacylglutathione hydrolase (251 aa).

Zn(2+)-binding residues include histidine 53, histidine 55, aspartate 57, histidine 58, histidine 110, aspartate 127, and histidine 165.

The protein belongs to the metallo-beta-lactamase superfamily. Glyoxalase II family. As to quaternary structure, monomer. Zn(2+) serves as cofactor.

The catalysed reaction is an S-(2-hydroxyacyl)glutathione + H2O = a 2-hydroxy carboxylate + glutathione + H(+). It participates in secondary metabolite metabolism; methylglyoxal degradation; (R)-lactate from methylglyoxal: step 2/2. Thiolesterase that catalyzes the hydrolysis of S-D-lactoyl-glutathione to form glutathione and D-lactic acid. The polypeptide is Hydroxyacylglutathione hydrolase (Blochmanniella pennsylvanica (strain BPEN)).